A 109-amino-acid polypeptide reads, in one-letter code: FK506-binding protein (109 aa).

In terms of domain architecture, PPIase FKBP-type spans 20-108 (GKEITVHYTG…IFEVELLKVY (89 aa)).

It belongs to the FKBP-type PPIase family.

It catalyses the reaction [protein]-peptidylproline (omega=180) = [protein]-peptidylproline (omega=0). Inhibited by FK506. Functionally, PPIases accelerate the folding of proteins. This is FK506-binding protein (fbp) from Neisseria meningitidis serogroup B (strain ATCC BAA-335 / MC58).